We begin with the raw amino-acid sequence, 513 residues long: Proline-rich receptor-like protein kinase PERK3 (513 aa).

Topologically, residues 1–123 are extracellular; the sequence is MARSNRCVPQ…SPPSPSRLST (123 aa). A glycan (N-linked (GlcNAc...) asparagine) is linked at asparagine 11. The segment covering 27–36 has biased composition (polar residues); it reads LKSRWQQITM. The segment at 27-119 is disordered; sequence LKSRWQQITM…GFSLSPPSPS (93 aa). N-linked (GlcNAc...) asparagine glycosylation is present at asparagine 66. Residues 78–89 show a composition bias toward low complexity; that stretch reads PSTSTPPRLGNR. The segment covering 99-111 has biased composition (polar residues); that stretch reads GQEPTTPTMTPGF. A helical transmembrane segment spans residues 124-144; it reads GAVVGISIGGGVFVLTLIFFL. At 145 to 513 the chain is on the cytoplasmic side; that stretch reads CKKKRPRDDK…TAQRYGGDSL (369 aa). The residue at position 172 (threonine 172) is a Phosphothreonine. The Protein kinase domain occupies 183 to 334; it reads FSEANLLGEG…DFGLAKIALD (152 aa). ATP is bound by residues 189 to 197 and lysine 211; that span reads LGEGGFGFV. Position 256 is a phosphotyrosine (tyrosine 256). Aspartate 307 acts as the Proton acceptor in catalysis. Position 340 is a phosphoserine (serine 340). Phosphothreonine occurs at positions 341 and 346. Tyrosine 354 bears the Phosphotyrosine mark.

This sequence belongs to the protein kinase superfamily. Ser/Thr protein kinase family. Expressed at low levels in inflorescence bolt, flower buds, siliques, roots, seedlings and leaves.

Its subcellular location is the cell membrane. The enzyme catalyses L-seryl-[protein] + ATP = O-phospho-L-seryl-[protein] + ADP + H(+). The catalysed reaction is L-threonyl-[protein] + ATP = O-phospho-L-threonyl-[protein] + ADP + H(+). The protein is Proline-rich receptor-like protein kinase PERK3 (PERK3) of Arabidopsis thaliana (Mouse-ear cress).